Here is a 382-residue protein sequence, read N- to C-terminus: Guanylate kinase 1 (382 aa).

Residues Gln-128–Ser-310 form the Guanylate kinase-like domain. Gly-135–Gly-142 lines the ATP pocket. Catalysis depends on residues Arg-168, Arg-261, and Arg-272. Residues Asn-295 and Asp-296 each coordinate ATP.

The protein belongs to the guanylate kinase family. As to quaternary structure, monomer.

The protein localises to the cytoplasm. It is found in the nucleus. It catalyses the reaction GMP + ATP = GDP + ADP. In terms of biological role, essential for recycling GMP and indirectly, cGMP. This Oryza sativa subsp. japonica (Rice) protein is Guanylate kinase 1 (GK1).